A 293-amino-acid chain; its full sequence is Diaminopimelate epimerase (293 aa).

Positions 17, 49, and 69 each coordinate substrate. Cys78 serves as the catalytic Proton donor. Substrate-binding positions include 79 to 80, Asn169, Asn203, and 221 to 222; these read GN and ER. Residue Cys230 is the Proton acceptor of the active site. 231–232 contacts substrate; the sequence is GS.

This sequence belongs to the diaminopimelate epimerase family. As to quaternary structure, homodimer.

It localises to the cytoplasm. The enzyme catalyses (2S,6S)-2,6-diaminopimelate = meso-2,6-diaminopimelate. The protein operates within amino-acid biosynthesis; L-lysine biosynthesis via DAP pathway; DL-2,6-diaminopimelate from LL-2,6-diaminopimelate: step 1/1. Its function is as follows. Catalyzes the stereoinversion of LL-2,6-diaminopimelate (L,L-DAP) to meso-diaminopimelate (meso-DAP), a precursor of L-lysine and an essential component of the bacterial peptidoglycan. The polypeptide is Diaminopimelate epimerase (Methylobacterium sp. (strain 4-46)).